The chain runs to 50 residues: Sperm protamine P1 (50 aa).

The protein belongs to the protamine P1 family. As to quaternary structure, cross-linked by interchain disulfide bonds around the DNA-helix. Testis.

Its subcellular location is the nucleus. The protein localises to the chromosome. Functionally, protamines substitute for histones in the chromatin of sperm during the haploid phase of spermatogenesis. They compact sperm DNA into a highly condensed, stable and inactive complex. The chain is Sperm protamine P1 (PRM1) from Pan paniscus (Pygmy chimpanzee).